Reading from the N-terminus, the 325-residue chain is tRNA N6-adenosine threonylcarbamoyltransferase (325 aa).

His-107 and His-111 together coordinate Fe cation. Substrate contacts are provided by residues Leu-129–Gly-133, Asp-162, Gly-175, and Asn-265. A Fe cation-binding site is contributed by Asp-293.

The protein belongs to the KAE1 / TsaD family. The cofactor is Fe(2+).

The protein localises to the cytoplasm. The enzyme catalyses L-threonylcarbamoyladenylate + adenosine(37) in tRNA = N(6)-L-threonylcarbamoyladenosine(37) in tRNA + AMP + H(+). Its function is as follows. Required for the formation of a threonylcarbamoyl group on adenosine at position 37 (t(6)A37) in tRNAs that read codons beginning with adenine. Is involved in the transfer of the threonylcarbamoyl moiety of threonylcarbamoyl-AMP (TC-AMP) to the N6 group of A37, together with TsaE and TsaB. TsaD likely plays a direct catalytic role in this reaction. The sequence is that of tRNA N6-adenosine threonylcarbamoyltransferase from Sulfurimonas denitrificans (strain ATCC 33889 / DSM 1251) (Thiomicrospira denitrificans (strain ATCC 33889 / DSM 1251)).